The chain runs to 397 residues: Mannosylglycerate synthase (397 aa).

GDP-alpha-D-mannose-binding positions include 7-11, isoleucine 35, glutamine 66, lysine 76, aspartate 100, and 100-101; these read PFKHE and DA. Aspartate 102 is an a divalent metal cation binding site. Residues arginine 131 and 136–139 contribute to the (R)-glycerate site; that span reads AMIT. Residues leucine 163 and aspartate 192 each coordinate GDP-alpha-D-mannose. Histidine 217 is a binding site for a divalent metal cation. Residues arginine 218 and tyrosine 220 each coordinate GDP-alpha-D-mannose.

This sequence belongs to the glycosyltransferase 78 family. Homotetramer. Dimer of dimers. Requires Mg(2+) as cofactor. Ca(2+) is required as a cofactor. It depends on Mn(2+) as a cofactor. Ni(2+) serves as cofactor. The cofactor is Co(2+).

It carries out the reaction (R)-glycerate + GDP-alpha-D-mannose = (2R)-2-O-(alpha-D-mannosyl)-glycerate + GDP + H(+). Inhibited by GDP. Its function is as follows. Involved in the biosynthesis of the stress protectant 2-O-alpha-D-mannosyl glycerate (MG) which is produced in response to growth at supraoptimal temperature and salinity, and protects several enzymes against inactivation by temperature, freeze-drying and osmotic stress. Catalyzes the condensation of alpha-GDP-D-mannose (GDP-Man) with D-glycerate to produce alpha-mannosyl-D-glycerate. It is specific for GDP-Man, but it can also use alpha-GDP-D-glucose (GDP-Glc), beta-GDP-D-fructose, alpha-UDP-D-mannose and alpha-UDP-D-glucose as sugar donors. It is specific for D-glycerate, but it can also use D-lactate and glycolate as sugar acceptors. This reaction occurs with a net retention of anomeric configuration; the newly formed glycosidic linkage has the same alpha configuration as the sugar donor. The polypeptide is Mannosylglycerate synthase (mgs) (Rhodothermus marinus (Rhodothermus obamensis)).